Consider the following 210-residue polypeptide: uncharacterized protein (210 aa).

In terms of domain architecture, Fe2OG dioxygenase spans 90–193 (KPDQIIVNEY…RISITFRNVI (104 aa)).

This is an uncharacterized protein from Acanthamoeba polyphaga (Amoeba).